A 484-amino-acid polypeptide reads, in one-letter code: Aspartyl/glutamyl-tRNA(Asn/Gln) amidotransferase subunit B (484 aa).

This sequence belongs to the GatB/GatE family. GatB subfamily. In terms of assembly, heterotrimer of A, B and C subunits.

It carries out the reaction L-glutamyl-tRNA(Gln) + L-glutamine + ATP + H2O = L-glutaminyl-tRNA(Gln) + L-glutamate + ADP + phosphate + H(+). The catalysed reaction is L-aspartyl-tRNA(Asn) + L-glutamine + ATP + H2O = L-asparaginyl-tRNA(Asn) + L-glutamate + ADP + phosphate + 2 H(+). In terms of biological role, allows the formation of correctly charged Asn-tRNA(Asn) or Gln-tRNA(Gln) through the transamidation of misacylated Asp-tRNA(Asn) or Glu-tRNA(Gln) in organisms which lack either or both of asparaginyl-tRNA or glutaminyl-tRNA synthetases. The reaction takes place in the presence of glutamine and ATP through an activated phospho-Asp-tRNA(Asn) or phospho-Glu-tRNA(Gln). The protein is Aspartyl/glutamyl-tRNA(Asn/Gln) amidotransferase subunit B of Bordetella parapertussis (strain 12822 / ATCC BAA-587 / NCTC 13253).